The primary structure comprises 108 residues: Parvalbumin beta 2 (108 aa).

An N-acetylalanine modification is found at Ala1. 2 EF-hand domains span residues 38-73 (KSAA…FSAG) and 77-108 (LTDA…MVKG). Ca(2+) is bound by residues Asp51, Asp53, Ser55, Phe57, Glu59, Glu62, Asp90, Asp92, Asp94, Lys96, and Glu101.

It belongs to the parvalbumin family.

Its function is as follows. In muscle, parvalbumin is thought to be involved in relaxation after contraction. It binds two calcium ions. This Merluccius bilinearis (Silver hake) protein is Parvalbumin beta 2.